The chain runs to 852 residues: Lon protease homolog 2, peroxisomal (852 aa).

The residue at position 2 (serine 2) is an N-acetylserine. One can recognise a Lon N-terminal domain in the interval 13–222 (LPLLLTHEGV…MTIPLLVRQI (210 aa)). Residue 375–382 (GPPGVGKT) participates in ATP binding. Residues 651–837 (LSQPGVAIGL…DEVLNAAFDG (187 aa)) enclose the Lon proteolytic domain. Active-site residues include serine 743 and lysine 786. The Microbody targeting signal signature appears at 850–852 (SKL).

Belongs to the peptidase S16 family. Interacts with PEX5. Interacts with TYSND1. May interact with enzymes involved in beta-oxidation of fatty acids, including ACOX1/AOX.

It is found in the peroxisome matrix. The catalysed reaction is Hydrolysis of proteins in presence of ATP.. In terms of biological role, ATP-dependent serine protease that mediates the selective degradation of misfolded and unassembled polypeptides in the peroxisomal matrix. Necessary for type 2 peroxisome targeting signal (PTS2)-containing protein processing and facilitates peroxisome matrix protein import. May indirectly regulate peroxisomal fatty acid beta-oxidation through degradation of the self-processed forms of TYSND1. The chain is Lon protease homolog 2, peroxisomal from Pongo abelii (Sumatran orangutan).